Consider the following 60-residue polypeptide: Large ribosomal subunit protein uL30 (60 aa).

This sequence belongs to the universal ribosomal protein uL30 family. Part of the 50S ribosomal subunit.

This chain is Large ribosomal subunit protein uL30, found in Cupriavidus necator (strain ATCC 17699 / DSM 428 / KCTC 22496 / NCIMB 10442 / H16 / Stanier 337) (Ralstonia eutropha).